The sequence spans 98 residues: Protein translation factor SUI1 homolog (98 aa).

Belongs to the SUI1 family.

The chain is Protein translation factor SUI1 homolog from Thermococcus onnurineus (strain NA1).